Reading from the N-terminus, the 98-residue chain is NADH-ubiquinone oxidoreductase chain 4L (98 aa).

Transmembrane regions (helical) follow at residues 1-21 (MSLV…GLLM), 29-49 (ALLC…LTIL), and 61-81 (IILL…LVMI).

This sequence belongs to the complex I subunit 4L family. Core subunit of respiratory chain NADH dehydrogenase (Complex I) which is composed of 45 different subunits.

The protein resides in the mitochondrion inner membrane. It catalyses the reaction a ubiquinone + NADH + 5 H(+)(in) = a ubiquinol + NAD(+) + 4 H(+)(out). In terms of biological role, core subunit of the mitochondrial membrane respiratory chain NADH dehydrogenase (Complex I) which catalyzes electron transfer from NADH through the respiratory chain, using ubiquinone as an electron acceptor. Part of the enzyme membrane arm which is embedded in the lipid bilayer and involved in proton translocation. This Delphinapterus leucas (Beluga whale) protein is NADH-ubiquinone oxidoreductase chain 4L (MT-ND4L).